We begin with the raw amino-acid sequence, 271 residues long: Integral membrane protein 2C (271 aa).

At Thr41 the chain carries Phosphothreonine. A helical; Signal-anchor for type II membrane protein transmembrane segment spans residues 59–79; that stretch reads VGGVCYLSMGMVVLLMGLVFA. A BRICHOS domain is found at 140–234; sequence FGGGDPADII…LCSGKDTYRL (95 aa). Cys167 and Cys226 are joined by a disulfide. Residue Asn173 is glycosylated (N-linked (GlcNAc...) asparagine).

It belongs to the ITM2 family. As to quaternary structure, interacts with BACE1. Interacts with APP. Interacts with STMN2. In terms of processing, type I membrane-bound, as well as soluble, furin has a pre-eminent role in ITM2C proteolytic processing. PCSK7 and PCSK5 may also be involved although to a lesser extent. The soluble form of PCSK7 is incapable of processing ITM2C. Fails to undergo shedding by ADAM10 and intramembrane cleavage by SPPL2B.

It localises to the lysosome membrane. It is found in the cell membrane. Negative regulator of amyloid-beta peptide production. May inhibit the processing of APP by blocking its access to alpha- and beta-secretase. Binding to the beta-secretase-cleaved APP C-terminal fragment is negligible, suggesting that ITM2C is a poor gamma-secretase cleavage inhibitor. May play a role in TNF-induced cell death and neuronal differentiation. In Bos taurus (Bovine), this protein is Integral membrane protein 2C (ITM2C).